A 200-amino-acid chain; its full sequence is NAD(P)H dehydrogenase (quinone) (200 aa).

The 187-residue stretch at 4-190 (VLVLYYSTYG…DGARFQGRLV (187 aa)) folds into the Flavodoxin-like domain. Residues 10 to 15 (STYGHL) and 78 to 80 (TRF) contribute to the FMN site. NAD(+) is bound at residue Tyr-12. Trp-98 is a binding site for substrate. FMN is bound by residues 113 to 119 (STATQHG) and His-134.

It belongs to the WrbA family. FMN serves as cofactor.

It carries out the reaction a quinone + NADH + H(+) = a quinol + NAD(+). It catalyses the reaction a quinone + NADPH + H(+) = a quinol + NADP(+). The polypeptide is NAD(P)H dehydrogenase (quinone) (Acidovorax ebreus (strain TPSY) (Diaphorobacter sp. (strain TPSY))).